Here is a 316-residue protein sequence, read N- to C-terminus: Homoserine kinase (316 aa).

Residue 97-107 (PHSRGLGSSAA) coordinates ATP.

The protein belongs to the GHMP kinase family. Homoserine kinase subfamily.

Its subcellular location is the cytoplasm. It carries out the reaction L-homoserine + ATP = O-phospho-L-homoserine + ADP + H(+). It functions in the pathway amino-acid biosynthesis; L-threonine biosynthesis; L-threonine from L-aspartate: step 4/5. Its function is as follows. Catalyzes the ATP-dependent phosphorylation of L-homoserine to L-homoserine phosphate. The sequence is that of Homoserine kinase from Mycobacterium tuberculosis (strain ATCC 25618 / H37Rv).